The chain runs to 311 residues: Cadmium, cobalt and zinc/H(+)-K(+) antiporter (311 aa).

Over 1-12 (MGHNHNEGANKK) the chain is Extracellular. A helical transmembrane segment spans residues 13 to 33 (VLLISFIMITGYMIIEAIGGF). At 34–43 (LTNSLALLSD) the chain is on the cytoplasmic side. A helical transmembrane segment spans residues 44–64 (AGHMLSDSISLMVALIAFTLA). Topologically, residues 65–78 (EKKANHNKTFGYKR) are extracellular. Residues 79–99 (FEILAAVINGAALILISLYII) form a helical membrane-spanning segment. Residues 100 to 115 (YEAIERFSNPPKVATT) are Cytoplasmic-facing. Residues 116–136 (GMLTISIIGLVVNLLVAWIMM) form a helical membrane-spanning segment. Residues 137-157 (SGGDTKNNLNIRGAYLHVISD) are Extracellular-facing. Residues 158-178 (MLGSVGAILAAILIIFFGWGW) traverse the membrane as a helical segment. The Cytoplasmic segment spans residues 179–311 (ADPLASIIVA…MEKQRDHHHH (133 aa)).

Belongs to the cation diffusion facilitator (CDF) transporter (TC 2.A.4) family. SLC30A subfamily.

The protein localises to the cell membrane. Its function is as follows. Involved in divalent cation and potassium homeostasis in the cell. Catalyzes the active efflux of zinc, cadmium and cobalt, in exchange for potassium and H(+) ions. The chain is Cadmium, cobalt and zinc/H(+)-K(+) antiporter (czcD) from Bacillus subtilis (strain 168).